The following is a 762-amino-acid chain: MALPALGLDSWSFLGLFLFQLLLLFLPPATTAGREGQGPTPRVKYHAGDGRRALSFFHQKGLQDFDTLLLSDDGGTLYVGAREAILALNIEDPGVPRLKNMIPWPASDRKKSECAFKRKSNETQCFNFIRVLVSFNSTHLYACGTFAFSPACTFIELQDSRLLPISEDRVVEGKGQSPFDPTHKHTAVMADGMLYSGTMNNFLGSEPILLRTLGSQPVLKTDNFLRWLQPDASFVAAIPSTQVVYFFFEETASEFEFFEKLRISRVAQVCKNDVGGEKLLQKKWTTFLKAQLLCTQPEQLPFNVIRHAVLQADNSSTDPQVYAVFTSQWHVGGTRSSAVCAFSLKDIKSVFEGKYKELDKETSRWTTYEYPDISPRPGSCSKGPSSDKALTFMKDHFLMDEPVVGTPLLVKSGVEYTWLAVETAQGIDGQSHLVMYLGTSTGSLHKAVVSGDHSAYLVEEIQLFPDPEPVRNLQLAPTQGAVFVGFSGGIWKVPRANCSVYESCMDCVLARDPHCAWDPESQTCRLLPTPILKSWKQDMQQGNPEWACASGPMGRSLGPRSRPQIIKEVLAVPNSILELPCPQSSALASYHWSHGVEAIPEAPSTVYNGSLLLLLRDGAGGLYQCWATENDFSYPVVSYWVHSQDQPLALDPKLAGIPRERMEAPLTRVGGGAALAAPKSYWPHFLTVTVLLALVLSGALVTFLVSPLGALRARGKVQGCGTLPSREKAPLSSEQCLQPSKEGRTSASDMDADNNLQGTEVA.

The first 32 residues, 1–32 (MALPALGLDSWSFLGLFLFQLLLLFLPPATTA), serve as a signal peptide directing secretion. The Extracellular segment spans residues 33-684 (GREGQGPTPR…LAAPKSYWPH (652 aa)). One can recognise a Sema domain in the interval 37-495 (QGPTPRVKYH…FSGGIWKVPR (459 aa)). A disulfide bond links cysteine 114 and cysteine 125. N-linked (GlcNAc...) asparagine glycans are attached at residues asparagine 121 and asparagine 136. Disulfide bonds link cysteine 143-cysteine 152, cysteine 270-cysteine 380, and cysteine 294-cysteine 340. Asparagine 314 and asparagine 497 each carry an N-linked (GlcNAc...) asparagine glycan. One can recognise a PSI domain in the interval 497–544 (NCSVYESCMDCVLARDPHCAWDPESQTCRLLPTPILKSWKQDMQQGNP). Disulfide bonds link cysteine 498–cysteine 515 and cysteine 507–cysteine 524. In terms of domain architecture, Ig-like C2-type spans 574–632 (NSILELPCPQSSALASYHWSHGVEAIPEAPSTVYNGSLLLLLRDGAGGLYQCWATENDF). N-linked (GlcNAc...) asparagine glycosylation occurs at asparagine 608. A helical membrane pass occupies residues 685–705 (FLTVTVLLALVLSGALVTFLV). The Cytoplasmic segment spans residues 706–762 (SPLGALRARGKVQGCGTLPSREKAPLSSEQCLQPSKEGRTSASDMDADNNLQGTEVA). The tract at residues 722–762 (TLPSREKAPLSSEQCLQPSKEGRTSASDMDADNNLQGTEVA) is disordered.

The protein belongs to the semaphorin family. As to quaternary structure, interacts with PLXNB1, PLXNB2, PLXNB3, PLXND1 and TIMD2.

The protein resides in the cell membrane. Cell surface receptor for PLXNB1, PLXNB2, PLXNB3 and PLXND1 that plays an important role in cell-cell signaling. Regulates glutamatergic and GABAergic synapse development. Promotes the development of inhibitory synapses in a PLXNB1-dependent manner and promotes the development of excitatory synapses in a PLXNB2-dependent manner. Plays a role in priming antigen-specific T-cells, promotes differentiation of Th1 T-helper cells, and thereby contributes to adaptive immunity. Promotes phosphorylation of TIMD2. Inhibits angiogenesis. Promotes axon growth cone collapse. Inhibits axonal extension by providing local signals to specify territories inaccessible for growing axons. This Bos taurus (Bovine) protein is Semaphorin-4A (SEMA4A).